Here is a 240-residue protein sequence, read N- to C-terminus: MTLQWTAVATFLYAEIGLILIFCLPFIPPQRWQKIFSFSVWGKIASFWNKAFLTIIILLIVLFLDAVREVRKYSSTHTIEKSSASRPAAYEHTQMKLFRSQRNLYISGFSLFFWLVLRRLVTLITQLAKELSHKGVLKHQAENINQAAKKFMEENERLKRLLKNYGKEEEHILEAENKKLEEDKEKLKTELKKASDALSKAQNDVMIMKMQSERLSKEYDRLLREHSELQDRAGKDKKCL.

Residues 1–6 (MTLQWT) are Lumenal-facing. The chain crosses the membrane as a helical span at residues 7–27 (AVATFLYAEIGLILIFCLPFI). The Cytoplasmic segment spans residues 28–43 (PPQRWQKIFSFSVWGK). The helical transmembrane segment at 44-64 (IASFWNKAFLTIIILLIVLFL) threads the bilayer. Over 65–103 (DAVREVRKYSSTHTIEKSSASRPAAYEHTQMKLFRSQRN) the chain is Lumenal. The helical transmembrane segment at 104 to 124 (LYISGFSLFFWLVLRRLVTLI) threads the bilayer. The Cytoplasmic portion of the chain corresponds to 125 to 240 (TQLAKELSHK…DRAGKDKKCL (116 aa)). Residues 166–233 (GKEEEHILEA…REHSELQDRA (68 aa)) adopt a coiled-coil conformation. The Di-lysine motif motif lies at 237–240 (KKCL).

This sequence belongs to the BCAP29/BCAP31 family. Homodimer and heterodimer with BCAP31. Binds CASP8 as a complex containing BCAP31, BCAP29, BCL2 and/or BCL2L1. Interacts with VAMP3, VAMP1 and membrane IgD immunoglobulins. May interact with ACTG1 and non-muscle myosin II.

Its subcellular location is the endoplasmic reticulum membrane. Its function is as follows. May play a role in anterograde transport of membrane proteins from the endoplasmic reticulum to the Golgi. May be involved in CASP8-mediated apoptosis. This is B-cell receptor-associated protein 29 (BCAP29) from Bos taurus (Bovine).